Reading from the N-terminus, the 441-residue chain is tRNA pseudouridine synthase Pus10 (441 aa).

Residue Asp268 is the Nucleophile of the active site. Tyr333 and Tyr405 together coordinate substrate.

Belongs to the pseudouridine synthase Pus10 family.

It carries out the reaction uridine(54) in tRNA = pseudouridine(54) in tRNA. The catalysed reaction is uridine(55) in tRNA = pseudouridine(55) in tRNA. Functionally, responsible for synthesis of pseudouridine from uracil-54 and uracil-55 in the psi GC loop of transfer RNAs. The chain is tRNA pseudouridine synthase Pus10 from Thermosphaera aggregans (strain DSM 11486 / M11TL).